The following is a 261-amino-acid chain: Tryptophan synthase alpha chain (261 aa).

Catalysis depends on proton acceptor residues E49 and D60.

The protein belongs to the TrpA family. In terms of assembly, tetramer of two alpha and two beta chains.

The enzyme catalyses (1S,2R)-1-C-(indol-3-yl)glycerol 3-phosphate + L-serine = D-glyceraldehyde 3-phosphate + L-tryptophan + H2O. It functions in the pathway amino-acid biosynthesis; L-tryptophan biosynthesis; L-tryptophan from chorismate: step 5/5. Functionally, the alpha subunit is responsible for the aldol cleavage of indoleglycerol phosphate to indole and glyceraldehyde 3-phosphate. In Roseiflexus sp. (strain RS-1), this protein is Tryptophan synthase alpha chain.